Reading from the N-terminus, the 223-residue chain is Ras-related protein Rab-37 (223 aa).

The tract at residues 1 to 23 is disordered; the sequence is MTGTPGAVATRDGEAPERSPPCS. Position 2 is an N-acetylthreonine (threonine 2). GTP contacts are provided by threonine 38, glycine 39, valine 40, glycine 41, lysine 42, threonine 43, cysteine 44, and threonine 62. Threonine 43 is a Mg(2+) binding site. 2 consecutive short sequence motifs (switch) follow at residues 52–67 and 85–102; these read GAFL…GIDF and DTAG…YYRD. Positions 62 and 85 each coordinate Mg(2+). 8 residues coordinate GTP: glycine 88, asparagine 143, lysine 144, aspartate 146, methionine 147, serine 173, alanine 174, and lysine 175. S-geranylgeranyl cysteine attachment occurs at residues cysteine 219 and cysteine 220. Cysteine methyl ester is present on cysteine 220. Positions 221 to 223 are cleaved as a propeptide — removed in mature form; that stretch reads SFM.

This sequence belongs to the small GTPase superfamily. Rab family. In terms of assembly, interacts with RIMS1. Interacts (in GDP-bound form) with RPGR, RPGR functions as guanine exchange factor (GEF). Requires Mg(2+) as cofactor.

The protein localises to the cytoplasmic vesicle. It is found in the cell projection. Its subcellular location is the cilium. It catalyses the reaction GTP + H2O = GDP + phosphate + H(+). Its activity is regulated as follows. Regulated by guanine nucleotide exchange factors (GEFs) including RPGR which promote the exchange of bound GDP for free GTP. Regulated by GTPase activating proteins (GAPs) which increase the GTP hydrolysis activity. Inhibited by GDP dissociation inhibitors (GDIs). In terms of biological role, the small GTPases Rab are key regulators of intracellular membrane trafficking, from the formation of transport vesicles to their fusion with membranes. Rabs cycle between an inactive GDP-bound form and an active GTP-bound form that is able to recruit to membranes different sets of downstream effectors directly responsible for vesicle formation, movement, tethering and fusion. Acts as an organizer for autophagosome biogenesis in a GTP-dependent manner. Involved in retinal homeostasis by autophagy regulation. This chain is Ras-related protein Rab-37, found in Homo sapiens (Human).